Here is a 144-residue protein sequence, read N- to C-terminus: Ribosomal RNA large subunit methyltransferase H (144 aa).

S-adenosyl-L-methionine-binding positions include L63, G92, and 111-116 (LSAMTL).

Belongs to the RNA methyltransferase RlmH family. In terms of assembly, homodimer.

It is found in the cytoplasm. It carries out the reaction pseudouridine(1915) in 23S rRNA + S-adenosyl-L-methionine = N(3)-methylpseudouridine(1915) in 23S rRNA + S-adenosyl-L-homocysteine + H(+). Specifically methylates the pseudouridine at position 1915 (m3Psi1915) in 23S rRNA. The polypeptide is Ribosomal RNA large subunit methyltransferase H (Prochlorococcus marinus (strain MIT 9313)).